A 240-amino-acid polypeptide reads, in one-letter code: uncharacterized protein (240 aa).

This is an uncharacterized protein from Acidianus two-tailed virus (ATV).